The primary structure comprises 456 residues: Ribulose bisphosphate carboxylase large chain (456 aa).

Lys-7 is subject to N6,N6,N6-trimethyllysine. 2 residues coordinate substrate: Asn-116 and Thr-166. The active-site Proton acceptor is Lys-168. Lys-170 serves as a coordination point for substrate. Positions 194, 196, and 197 each coordinate Mg(2+). An N6-carboxylysine modification is found at Lys-194. The Proton acceptor role is filled by His-287. The substrate site is built by Arg-288, His-320, and Ser-372.

This sequence belongs to the RuBisCO large chain family. Type I subfamily. As to quaternary structure, heterohexadecamer of 8 large chains and 8 small chains; disulfide-linked. The disulfide link is formed within the large subunit homodimers. Mg(2+) serves as cofactor. Post-translationally, the disulfide bond which can form in the large chain dimeric partners within the hexadecamer appears to be associated with oxidative stress and protein turnover.

It is found in the plastid. The protein resides in the chloroplast. The catalysed reaction is 2 (2R)-3-phosphoglycerate + 2 H(+) = D-ribulose 1,5-bisphosphate + CO2 + H2O. The enzyme catalyses D-ribulose 1,5-bisphosphate + O2 = 2-phosphoglycolate + (2R)-3-phosphoglycerate + 2 H(+). Its function is as follows. RuBisCO catalyzes two reactions: the carboxylation of D-ribulose 1,5-bisphosphate, the primary event in carbon dioxide fixation, as well as the oxidative fragmentation of the pentose substrate in the photorespiration process. Both reactions occur simultaneously and in competition at the same active site. The sequence is that of Ribulose bisphosphate carboxylase large chain from Barnardia japonica (Chinese squill).